A 331-amino-acid polypeptide reads, in one-letter code: MAIPEFTMRQLLEAGVHFGHQSHRWNPKMAEYIFGARNNIHIIDLAQTVPLMHRALQAISDTVAKGGRVLFVGTKRQAQDAVADAAKRSAQYFVNSRWLGGTLTNWKTISGSIKRLRHLDDVLNSGDASAYTKKERLTLQRERDKLDRSLGGIKDMGGLPDLIFVIDTNKEDIAIQEAQRLGIPVAAIVDTNCDPKGITYLVPGNDDAGRAIALYCDLIARAVIDGISRAQGDSGIDIGAASRPLREDLPAAQATGFQGLSGPRGTPDDLKKLTGVSGDIEKKFNDLGIFHYWQFAELDHDTVLQIGEEVGLPGRADGWVAQAKGLTAEAE.

Belongs to the universal ribosomal protein uS2 family.

The chain is Small ribosomal subunit protein uS2 from Rhodopseudomonas palustris (strain BisB5).